Here is a 194-residue protein sequence, read N- to C-terminus: Peptidyl-tRNA hydrolase (194 aa).

Y17 contacts tRNA. Residue H22 is the Proton acceptor of the active site. The tRNA site is built by F68, N70, and N116.

The protein belongs to the PTH family. Monomer.

Its subcellular location is the cytoplasm. It catalyses the reaction an N-acyl-L-alpha-aminoacyl-tRNA + H2O = an N-acyl-L-amino acid + a tRNA + H(+). Hydrolyzes ribosome-free peptidyl-tRNAs (with 1 or more amino acids incorporated), which drop off the ribosome during protein synthesis, or as a result of ribosome stalling. Functionally, catalyzes the release of premature peptidyl moieties from peptidyl-tRNA molecules trapped in stalled 50S ribosomal subunits, and thus maintains levels of free tRNAs and 50S ribosomes. In Actinobacillus pleuropneumoniae serotype 7 (strain AP76), this protein is Peptidyl-tRNA hydrolase.